The primary structure comprises 194 residues: Imidazoleglycerol-phosphate dehydratase (194 aa).

Belongs to the imidazoleglycerol-phosphate dehydratase family.

The protein resides in the cytoplasm. It catalyses the reaction D-erythro-1-(imidazol-4-yl)glycerol 3-phosphate = 3-(imidazol-4-yl)-2-oxopropyl phosphate + H2O. It functions in the pathway amino-acid biosynthesis; L-histidine biosynthesis; L-histidine from 5-phospho-alpha-D-ribose 1-diphosphate: step 6/9. This is Imidazoleglycerol-phosphate dehydratase from Thermoanaerobacter sp. (strain X514).